The primary structure comprises 218 residues: Mitochondrial fission factor (218 aa).

Over 1–198 the chain is Cytoplasmic; the sequence is MAEISRIQYE…ENKERAKREM (198 aa). T89 is modified (phosphothreonine). A phosphoserine mark is found at S129, S131, S146, and S171. Residues 167–198 adopt a coiled-coil conformation; sequence VDAASLRRQIIKLNRRLQLLEEENKERAKREM. The helical; Anchor for type IV membrane protein transmembrane segment at 199 to 216 threads the bilayer; that stretch reads VMYSITVAFWLLNSWLWF. Topologically, residues 217-218 are mitochondrial intermembrane; the sequence is RR.

This sequence belongs to the Tango11 family. As to quaternary structure, homodimer. Interacts with DNM1L. Interacts with C11orf65/MFI; the interaction inhibits MFF interaction with DNM1L.

It localises to the mitochondrion outer membrane. Its subcellular location is the peroxisome. The protein resides in the cytoplasmic vesicle. The protein localises to the secretory vesicle. It is found in the synaptic vesicle. Its function is as follows. Plays a role in mitochondrial and peroxisomal fission. Promotes the recruitment and association of the fission mediator dynamin-related protein 1 (DNM1L) to the mitochondrial surface. May be involved in regulation of synaptic vesicle membrane dynamics by recruitment of DNM1L to clathrin-containing vesicles. The protein is Mitochondrial fission factor (MFF) of Bos taurus (Bovine).